Consider the following 548-residue polypeptide: Eukaryotic translation initiation factor 3 subunit D (548 aa).

N6-acetyllysine is present on Lys-53. Ser-161 is subject to Phosphoserine. The RNA gate stretch occupies residues 285 to 299; the sequence is DFDLLTVSETANEPP. The segment at 523-548 is disordered; sequence PDGTFSSDEDDEEEEEEEEEEEEEEA. Ser-528 and Ser-529 each carry phosphoserine. Positions 529–548 are enriched in acidic residues; sequence SDEDDEEEEEEEEEEEEEEA.

The protein belongs to the eIF-3 subunit D family. Component of the eukaryotic translation initiation factor 3 (eIF-3) complex, which is composed of 13 subunits: EIF3A, EIF3B, EIF3C, EIF3D, EIF3E, EIF3F, EIF3G, EIF3H, EIF3I, EIF3J, EIF3K, EIF3L and EIF3M. The eIF-3 complex appears to include 3 stable modules: module A is composed of EIF3A, EIF3B, EIF3G and EIF3I; module B is composed of EIF3F, EIF3H, and EIF3M; and module C is composed of EIF3C, EIF3D, EIF3E, EIF3K and EIF3L. EIF3C of module C binds EIF3B of module A and EIF3H of module B, thereby linking the three modules. EIF3J is a labile subunit that binds to the eIF-3 complex via EIF3B. The eIF-3 complex interacts with RPS6KB1 under conditions of nutrient depletion. Mitogenic stimulation leads to binding and activation of a complex composed of MTOR and RPTOR, leading to phosphorylation and release of RPS6KB1 and binding of EIF4B to eIF-3.

Its subcellular location is the cytoplasm. MRNA cap-binding component of the eukaryotic translation initiation factor 3 (eIF-3) complex, a complex required for several steps in the initiation of protein synthesis of a specialized repertoire of mRNAs. The eIF-3 complex associates with the 40S ribosome and facilitates the recruitment of eIF-1, eIF-1A, eIF-2:GTP:methionyl-tRNAi and eIF-5 to form the 43S pre-initiation complex (43S PIC). The eIF-3 complex stimulates mRNA recruitment to the 43S PIC and scanning of the mRNA for AUG recognition. The eIF-3 complex is also required for disassembly and recycling of post-termination ribosomal complexes and subsequently prevents premature joining of the 40S and 60S ribosomal subunits prior to initiation. The eIF-3 complex specifically targets and initiates translation of a subset of mRNAs involved in cell proliferation, including cell cycling, differentiation and apoptosis, and uses different modes of RNA stem-loop binding to exert either translational activation or repression. In the eIF-3 complex, EIF3D specifically recognizes and binds the 7-methylguanosine cap of a subset of mRNAs. The chain is Eukaryotic translation initiation factor 3 subunit D from Bos taurus (Bovine).